A 1588-amino-acid polypeptide reads, in one-letter code: Ubiquitin carboxyl-terminal hydrolase 54 (1588 aa).

Omega-N-methylarginine is present on Arg12. Positions 31–352 (KGLSNEPGQN…QPLLLLYADP (322 aa)) constitute a USP domain. Cys42 acts as the Nucleophile in catalysis. 12 residues coordinate Zn(2+): His67, Cys69, Cys74, Cys77, His133, Cys145, Cys150, His153, Cys166, Cys169, Cys225, and Cys229. Residue His302 is the Proton acceptor of the active site. Basic and acidic residues-rich tracts occupy residues 380 to 391 (DSGHLTDSECNQ) and 424 to 434 (SEGETLKEKQA). 2 disordered regions span residues 380–447 (DSGH…TSRL) and 459–519 (HSRP…PTWR). Ser424 is modified (phosphoserine). Polar residues-rich tracts occupy residues 436 to 445 (RNASKSSSTS) and 459 to 471 (HSRP…TNAA). Low complexity predominate over residues 499-512 (TESTSSEARSSSSS). 3 positions are modified to phosphoserine: Ser574, Ser613, and Ser616. Low complexity predominate over residues 601-616 (ESGYESSERNSSSPVS). Residues 601-620 (ESGYESSERNSSSPVSLDAA) form a disordered region. The stretch at 678–712 (TSKSELDELQEEVARRAQEQELRKKREKELEAAKG) forms a coiled coil. Disordered regions lie at residues 801-839 (RSLQ…EQSV), 856-895 (DSEL…SPPG), 950-969 (EDNS…TTQD), 1093-1172 (TRDV…SRRR), and 1525-1562 (GSVL…SAGE). Over residues 808-825 (QQQPPSQQPVQPSASLPS) the composition is skewed to low complexity. Over residues 878–895 (SLVSPSPAQSVSQHSPPG) the composition is skewed to polar residues. Ser1138 is modified (phosphoserine). Residues 1536-1547 (RRIDVPPDDDGR) show a composition bias toward basic and acidic residues.

The protein belongs to the peptidase C19 family.

The enzyme catalyses Thiol-dependent hydrolysis of ester, thioester, amide, peptide and isopeptide bonds formed by the C-terminal Gly of ubiquitin (a 76-residue protein attached to proteins as an intracellular targeting signal).. Functionally, deubiquitinase that specifically mediates 'Lys-63'-linked deubiquitination of substrates with a polyubiquitin chain composed of at least 3 ubiquitins. Specifically recognizes ubiquitin chain in position S2 and catalyzes cleavage of polyubiquitin within 'Lys-63'-linked chains. Not able to deubiquitinate substrates with shorter ubiquitin chains. Mediates deubiquitination of PLK4, maintaining PLK4 stability by reducing its ubiquitination-mediated degradation. The polypeptide is Ubiquitin carboxyl-terminal hydrolase 54 (Usp54) (Rattus norvegicus (Rat)).